The chain runs to 491 residues: Glutamate--tRNA ligase (491 aa).

A 'HIGH' region motif is present at residues 13-23 (PSPTGFLHIGN). Zn(2+) is bound by residues cysteine 110, cysteine 112, cysteine 137, and histidine 139. The 'KMSKS' region motif lies at 254–258 (KLSKR). Lysine 257 contacts ATP.

Belongs to the class-I aminoacyl-tRNA synthetase family. Glutamate--tRNA ligase type 1 subfamily. In terms of assembly, monomer. The cofactor is Zn(2+).

The protein localises to the cytoplasm. It catalyses the reaction tRNA(Glu) + L-glutamate + ATP = L-glutamyl-tRNA(Glu) + AMP + diphosphate. Functionally, catalyzes the attachment of glutamate to tRNA(Glu) in a two-step reaction: glutamate is first activated by ATP to form Glu-AMP and then transferred to the acceptor end of tRNA(Glu). The chain is Glutamate--tRNA ligase from Listeria innocua serovar 6a (strain ATCC BAA-680 / CLIP 11262).